Reading from the N-terminus, the 300-residue chain is GTPase Era (300 aa).

The region spanning 8–176 is the Era-type G domain; the sequence is RCGYVAIVGR…EAQIAKHLPE (169 aa). The G1 stretch occupies residues 16 to 23; sequence GRPNVGKS. A GTP-binding site is contributed by 16-23; the sequence is GRPNVGKS. A G2 region spans residues 42–46; sequence QTTRH. A G3 region spans residues 63 to 66; sequence DTPG. GTP-binding positions include 63–67 and 125–128; these read DTPGM and NKTD. Residues 125-128 form a G4 region; the sequence is NKTD. Positions 155–157 are G5; the sequence is ISA. Residues 199-283 enclose the KH type-2 domain; sequence VREKIMRQLG…MLNLWVKVKG (85 aa).

It belongs to the TRAFAC class TrmE-Era-EngA-EngB-Septin-like GTPase superfamily. Era GTPase family. In terms of assembly, monomer.

The protein resides in the cytoplasm. It is found in the cell inner membrane. Its function is as follows. An essential GTPase that binds both GDP and GTP, with rapid nucleotide exchange. Plays a role in 16S rRNA processing and 30S ribosomal subunit biogenesis and possibly also in cell cycle regulation and energy metabolism. In Pseudomonas entomophila (strain L48), this protein is GTPase Era.